Here is a 537-residue protein sequence, read N- to C-terminus: Phosphoenolpyruvate carboxykinase (ATP) (537 aa).

The substrate site is built by R61, Y195, and K201. Residues K201, H220, and 236 to 244 (GLSGTGKTT) contribute to the ATP site. Mn(2+)-binding residues include K201 and H220. Residue D257 participates in Mn(2+) binding. Positions 285, 323, and 448 each coordinate ATP. R323 serves as a coordination point for substrate.

This sequence belongs to the phosphoenolpyruvate carboxykinase (ATP) family. The cofactor is Mn(2+).

Its subcellular location is the cytoplasm. It catalyses the reaction oxaloacetate + ATP = phosphoenolpyruvate + ADP + CO2. The protein operates within carbohydrate biosynthesis; gluconeogenesis. Involved in the gluconeogenesis. Catalyzes the conversion of oxaloacetate (OAA) to phosphoenolpyruvate (PEP) through direct phosphoryl transfer between the nucleoside triphosphate and OAA. In Azorhizobium caulinodans (strain ATCC 43989 / DSM 5975 / JCM 20966 / LMG 6465 / NBRC 14845 / NCIMB 13405 / ORS 571), this protein is Phosphoenolpyruvate carboxykinase (ATP).